The following is a 255-amino-acid chain: Methylthioribulose-1-phosphate dehydratase (255 aa).

Residue cysteine 98 participates in substrate binding. Residues histidine 116 and histidine 118 each contribute to the Zn(2+) site. The active-site Proton donor/acceptor is glutamate 150. Histidine 207 contributes to the Zn(2+) binding site.

Belongs to the aldolase class II family. MtnB subfamily. Zn(2+) serves as cofactor.

It is found in the cytoplasm. It carries out the reaction 5-(methylsulfanyl)-D-ribulose 1-phosphate = 5-methylsulfanyl-2,3-dioxopentyl phosphate + H2O. It functions in the pathway amino-acid biosynthesis; L-methionine biosynthesis via salvage pathway; L-methionine from S-methyl-5-thio-alpha-D-ribose 1-phosphate: step 2/6. Its function is as follows. Catalyzes the dehydration of methylthioribulose-1-phosphate (MTRu-1-P) into 2,3-diketo-5-methylthiopentyl-1-phosphate (DK-MTP-1-P). This is Methylthioribulose-1-phosphate dehydratase from Pyricularia oryzae (strain 70-15 / ATCC MYA-4617 / FGSC 8958) (Rice blast fungus).